The following is a 67-amino-acid chain: DNA-directed RNA polymerase subunit omega (67 aa).

This sequence belongs to the RNA polymerase subunit omega family. In terms of assembly, the RNAP catalytic core consists of 2 alpha, 1 beta, 1 beta' and 1 omega subunit. When a sigma factor is associated with the core the holoenzyme is formed, which can initiate transcription.

It carries out the reaction RNA(n) + a ribonucleoside 5'-triphosphate = RNA(n+1) + diphosphate. Its function is as follows. Promotes RNA polymerase assembly. Latches the N- and C-terminal regions of the beta' subunit thereby facilitating its interaction with the beta and alpha subunits. The sequence is that of DNA-directed RNA polymerase subunit omega from Bordetella pertussis (strain Tohama I / ATCC BAA-589 / NCTC 13251).